Consider the following 364-residue polypeptide: Fructose-bisphosphate aldolase A (364 aa).

A Phosphotyrosine modification is found at tyrosine 5. Threonine 9 carries the post-translational modification Phosphothreonine. Residues serine 36 and serine 39 each carry the phosphoserine modification. Lysine 42 carries the post-translational modification N6-acetyllysine; alternate. Residue lysine 42 forms a Glycyl lysine isopeptide (Lys-Gly) (interchain with G-Cter in SUMO1); alternate linkage. Lysine 42 participates in a covalent cross-link: Glycyl lysine isopeptide (Lys-Gly) (interchain with G-Cter in SUMO2); alternate. Residue arginine 43 coordinates beta-D-fructose 1,6-bisphosphate. Phosphoserine is present on serine 46. Lysine 99 carries the N6-(2-hydroxyisobutyryl)lysine modification. The residue at position 108 (lysine 108) is an N6-acetyllysine. At lysine 111 the chain carries N6-acetyllysine; alternate. Lysine 111 bears the N6-malonyllysine; alternate mark. Serine 132 is subject to Phosphoserine. Position 147 is an N6-(2-hydroxyisobutyryl)lysine (lysine 147). Glutamate 188 acts as the Proton acceptor in catalysis. The Schiff-base intermediate with dihydroxyacetone-P role is filled by lysine 230. Serine 272 is subject to Phosphoserine. Beta-D-fructose 1,6-bisphosphate is bound by residues 272–274, serine 301, and arginine 304; that span reads SGG. At lysine 312 the chain carries N6-malonyllysine. The residue at position 330 (lysine 330) is an N6-acetyllysine.

It belongs to the class I fructose-bisphosphate aldolase family. Homotetramer. Interacts with SNX9 and WAS. Interacts with FBP2; the interaction blocks FBP2 inhibition by physiological concentrations of AMP and reduces inhibition by Ca(2+).

The protein localises to the cytoplasm. It is found in the myofibril. The protein resides in the sarcomere. It localises to the i band. Its subcellular location is the m line. It carries out the reaction beta-D-fructose 1,6-bisphosphate = D-glyceraldehyde 3-phosphate + dihydroxyacetone phosphate. It participates in carbohydrate degradation; glycolysis; D-glyceraldehyde 3-phosphate and glycerone phosphate from D-glucose: step 4/4. Its function is as follows. Catalyzes the reversible conversion of beta-D-fructose 1,6-bisphosphate (FBP) into two triose phosphate and plays a key role in glycolysis and gluconeogenesis. In addition, may also function as scaffolding protein. The polypeptide is Fructose-bisphosphate aldolase A (Homo sapiens (Human)).